The sequence spans 218 residues: N-(5'-phosphoribosyl)anthranilate isomerase (218 aa).

Belongs to the TrpF family.

It carries out the reaction N-(5-phospho-beta-D-ribosyl)anthranilate = 1-(2-carboxyphenylamino)-1-deoxy-D-ribulose 5-phosphate. The protein operates within amino-acid biosynthesis; L-tryptophan biosynthesis; L-tryptophan from chorismate: step 3/5. In Stenotrophomonas maltophilia (strain R551-3), this protein is N-(5'-phosphoribosyl)anthranilate isomerase.